A 204-amino-acid polypeptide reads, in one-letter code: Thymidylate kinase (204 aa).

An ATP-binding site is contributed by 11 to 18 (GLDKSGKT).

This sequence belongs to the thymidylate kinase family.

The catalysed reaction is dTMP + ATP = dTDP + ADP. It functions in the pathway pyrimidine metabolism; dTTP biosynthesis. The sequence is that of Thymidylate kinase (TMK) from Ectromelia virus (strain Moscow) (ECTV).